The sequence spans 251 residues: NADPH-dependent oxidoreductase (251 aa).

It belongs to the flavin oxidoreductase frp family. It depends on FMN as a cofactor.

Reduces FMN, organic nitro compounds and disulfide DTNB. Involved in maintenance of the cellular redox state and the disulfide stress response. The protein is NADPH-dependent oxidoreductase (nfrA) of Staphylococcus epidermidis (strain ATCC 35984 / DSM 28319 / BCRC 17069 / CCUG 31568 / BM 3577 / RP62A).